A 119-amino-acid chain; its full sequence is Immunoglobulin heavy variable 3-73 (119 aa).

The first 19 residues, 1-19 (MEFGLSWVFLVAILKGVQC), serve as a signal peptide directing secretion. Positions 20–44 (EVQLVESGGGLVQPGGSLKLSCAAS) are framework-1. One can recognise an Ig-like domain in the interval 20-119 (EVQLVESGGG…EDTAVYYCTR (100 aa)). Residues Cys-41 and Cys-117 are joined by a disulfide bond. A complementarity-determining-1 region spans residues 45–52 (GFTFSGSA). Residues 53 to 69 (MHWVRQASGKGLEWVGR) are framework-2. The interval 70 to 79 (IRSKANSYAT) is complementarity-determining-2. Residues 80–117 (AYAASVKGRFTISRDDSKNTAYLQMNSLKTEDTAVYYC) form a framework-3 region. The tract at residues 118–119 (TR) is complementarity-determining-3.

As to quaternary structure, immunoglobulins are composed of two identical heavy chains and two identical light chains; disulfide-linked.

It localises to the secreted. It is found in the cell membrane. In terms of biological role, v region of the variable domain of immunoglobulin heavy chains that participates in the antigen recognition. Immunoglobulins, also known as antibodies, are membrane-bound or secreted glycoproteins produced by B lymphocytes. In the recognition phase of humoral immunity, the membrane-bound immunoglobulins serve as receptors which, upon binding of a specific antigen, trigger the clonal expansion and differentiation of B lymphocytes into immunoglobulins-secreting plasma cells. Secreted immunoglobulins mediate the effector phase of humoral immunity, which results in the elimination of bound antigens. The antigen binding site is formed by the variable domain of one heavy chain, together with that of its associated light chain. Thus, each immunoglobulin has two antigen binding sites with remarkable affinity for a particular antigen. The variable domains are assembled by a process called V-(D)-J rearrangement and can then be subjected to somatic hypermutations which, after exposure to antigen and selection, allow affinity maturation for a particular antigen. The chain is Immunoglobulin heavy variable 3-73 from Homo sapiens (Human).